We begin with the raw amino-acid sequence, 347 residues long: Eukaryotic translation initiation factor 3 subunit I (347 aa).

WD repeat units lie at residues 8–47, 50–89, 149–190, 194–233, and 291–330; these read GHERPLTQVKYNKEGDLLFSCSKDSSASVWYSLNGERLGT, GHTGTIWSIDVDCFTKYCVTGSADYSIKLWDVSNGQCVAT, THEG…EYVD, LHEKSISDMQFSPDLTYFITSSRDTNSFLVDVSTLQVLKK, and GHFGPLNTVAISPQGTSYASGGEDGFIRLHHFEKSYFDFK. Ser-302 bears the Phosphoserine mark.

It belongs to the eIF-3 subunit I family. In terms of assembly, component of the eukaryotic translation initiation factor 3 (eIF-3) complex.

It is found in the cytoplasm. Its function is as follows. Component of the eukaryotic translation initiation factor 3 (eIF-3) complex, which is involved in protein synthesis of a specialized repertoire of mRNAs and, together with other initiation factors, stimulates binding of mRNA and methionyl-tRNAi to the 40S ribosome. The eIF-3 complex specifically targets and initiates translation of a subset of mRNAs involved in cell proliferation. The protein is Eukaryotic translation initiation factor 3 subunit I of Saccharomyces cerevisiae (strain YJM789) (Baker's yeast).